A 526-amino-acid polypeptide reads, in one-letter code: GMP synthase [glutamine-hydrolyzing] (526 aa).

The Glutamine amidotransferase type-1 domain maps to 10–208 (RILILDFGSQ…VVDLCGCEKL (199 aa)). The active-site Nucleophile is cysteine 87. Active-site residues include histidine 182 and glutamate 184. A GMPS ATP-PPase domain is found at 209–401 (WTTENIIDDS…LGLPSDMVYR (193 aa)). 236–242 (SGGVDSS) serves as a coordination point for ATP.

As to quaternary structure, homodimer.

It catalyses the reaction XMP + L-glutamine + ATP + H2O = GMP + L-glutamate + AMP + diphosphate + 2 H(+). The protein operates within purine metabolism; GMP biosynthesis; GMP from XMP (L-Gln route): step 1/1. In terms of biological role, catalyzes the synthesis of GMP from XMP. The polypeptide is GMP synthase [glutamine-hydrolyzing] (Hydrogenovibrio crunogenus (strain DSM 25203 / XCL-2) (Thiomicrospira crunogena)).